The chain runs to 259 residues: Phosphatidylinositol transfer protein 2 (259 aa).

Residues 231–259 (LTIEDIRKIEEETKAELAKKLEENKAANK) adopt a coiled-coil conformation.

This sequence belongs to the PtdIns transfer protein family. PI transfer class IIA subfamily.

The protein resides in the cytoplasm. It localises to the golgi apparatus. Its function is as follows. Catalyzes the transfer of PtdIns and phosphatidylcholine between membranes. This chain is Phosphatidylinositol transfer protein 2 (pitB), found in Dictyostelium discoideum (Social amoeba).